A 513-amino-acid chain; its full sequence is ATP synthase subunit alpha (513 aa).

Residue 169-176 (GDRQTGKT) coordinates ATP.

Belongs to the ATPase alpha/beta chains family. In terms of assembly, F-type ATPases have 2 components, CF(1) - the catalytic core - and CF(0) - the membrane proton channel. CF(1) has five subunits: alpha(3), beta(3), gamma(1), delta(1), epsilon(1). CF(0) has three main subunits: a(1), b(2) and c(9-12). The alpha and beta chains form an alternating ring which encloses part of the gamma chain. CF(1) is attached to CF(0) by a central stalk formed by the gamma and epsilon chains, while a peripheral stalk is formed by the delta and b chains.

Its subcellular location is the cell inner membrane. It catalyses the reaction ATP + H2O + 4 H(+)(in) = ADP + phosphate + 5 H(+)(out). Its function is as follows. Produces ATP from ADP in the presence of a proton gradient across the membrane. The alpha chain is a regulatory subunit. The chain is ATP synthase subunit alpha from Pasteurella multocida (strain Pm70).